Consider the following 351-residue polypeptide: Beta-hexosaminidase (351 aa).

Residues aspartate 62, arginine 70, arginine 134, and 164-165 (KH) contribute to the substrate site. Histidine 177 acts as the Proton donor/acceptor in catalysis. Catalysis depends on aspartate 249, which acts as the Nucleophile.

It belongs to the glycosyl hydrolase 3 family. NagZ subfamily. Monomer.

Its subcellular location is the cytoplasm. It carries out the reaction Hydrolysis of terminal non-reducing N-acetyl-D-hexosamine residues in N-acetyl-beta-D-hexosaminides.. Its pathway is cell wall biogenesis; peptidoglycan recycling. Plays a role in peptidoglycan recycling by cleaving the terminal beta-1,4-linked N-acetylglucosamine (GlcNAc) from peptide-linked peptidoglycan fragments, giving rise to free GlcNAc, anhydro-N-acetylmuramic acid and anhydro-N-acetylmuramic acid-linked peptides. The chain is Beta-hexosaminidase from Pasteurella multocida (strain Pm70).